The following is a 181-amino-acid chain: S-fimbrial protein subunit SfaA (181 aa).

An N-terminal signal peptide occupies residues 1 to 24 (MKLKFISMAVFSALTLGVATNASA). Cys44 and Cys84 form a disulfide bridge.

The protein belongs to the fimbrial protein family.

It is found in the fimbrium. Functionally, fimbriae (also called pili), polar filaments radiating from the surface of the bacterium to a length of 0.5-1.5 micrometers and numbering 100-300 per cell, enable bacteria to colonize the epithelium of specific host organs. The major fimbrial subunit. Interacts with alpha-sialic acid-(2-3)-beta-Gal containing receptors. It belongs to the group of Mrh (Mannose-resistant hemagglutination) fimbrial proteins. This Escherichia coli O6:K15:H31 (strain 536 / UPEC) protein is S-fimbrial protein subunit SfaA (sfaA).